The following is a 367-amino-acid chain: Germination protease (367 aa).

Residues 1–15 constitute a propeptide that is removed on maturation; that stretch reads MKEPLDLSKYSVRTD.

Belongs to the peptidase A25 family. In terms of assembly, homotetramer. In terms of processing, autoproteolytically processed. The inactive tetrameric zymogen termed p46 autoprocesses to a smaller form termed p41, which is active only during spore germination.

It carries out the reaction Endopeptidase action with P4 Glu or Asp, P1 preferably Glu &gt; Asp, P1' hydrophobic and P2' Ala.. Initiates the rapid degradation of small, acid-soluble proteins during spore germination. The protein is Germination protease of Bacillus mycoides (strain KBAB4) (Bacillus weihenstephanensis).